Consider the following 443-residue polypeptide: Glucose-6-phosphate isomerase (443 aa).

Catalysis depends on glutamate 285, which acts as the Proton donor. Active-site residues include histidine 306 and lysine 420.

This sequence belongs to the GPI family.

The protein localises to the cytoplasm. It catalyses the reaction alpha-D-glucose 6-phosphate = beta-D-fructose 6-phosphate. It participates in carbohydrate biosynthesis; gluconeogenesis. Its pathway is carbohydrate degradation; glycolysis; D-glyceraldehyde 3-phosphate and glycerone phosphate from D-glucose: step 2/4. In terms of biological role, catalyzes the reversible isomerization of glucose-6-phosphate to fructose-6-phosphate. The chain is Glucose-6-phosphate isomerase from Staphylococcus haemolyticus (strain JCSC1435).